The following is a 301-amino-acid chain: Ribosomal RNA small subunit methyltransferase A (301 aa).

Residues asparagine 23, isoleucine 25, glycine 50, glutamate 72, aspartate 97, and asparagine 149 each coordinate S-adenosyl-L-methionine.

It belongs to the class I-like SAM-binding methyltransferase superfamily. rRNA adenine N(6)-methyltransferase family. RsmA subfamily.

The protein localises to the cytoplasm. The catalysed reaction is adenosine(1518)/adenosine(1519) in 16S rRNA + 4 S-adenosyl-L-methionine = N(6)-dimethyladenosine(1518)/N(6)-dimethyladenosine(1519) in 16S rRNA + 4 S-adenosyl-L-homocysteine + 4 H(+). In terms of biological role, specifically dimethylates two adjacent adenosines (A1518 and A1519) in the loop of a conserved hairpin near the 3'-end of 16S rRNA in the 30S particle. May play a critical role in biogenesis of 30S subunits. The polypeptide is Ribosomal RNA small subunit methyltransferase A (Rickettsia conorii (strain ATCC VR-613 / Malish 7)).